Reading from the N-terminus, the 403-residue chain is Peptidyl-prolyl cis-trans isomerase FKBP8 (403 aa).

The disordered stretch occupies residues 26–54 (VLDGVDDAEEEDDLSGLPPLEDMGQPTVE). The segment covering 28–39 (DGVDDAEEEDDL) has biased composition (acidic residues). The PPIase FKBP-type domain occupies 110–195 (GQVVTVHLQM…CLEVTLKTAE (86 aa)). A TPR 1 repeat occupies 212 to 245 (ANRKRECGNAHYQRADFVLAANSYDLAIKAITSN). Residues Lys240, Lys262, Lys264, and Lys275 each participate in a glycyl lysine isopeptide (Lys-Gly) (interchain with G-Cter in ubiquitin) cross-link. 2 TPR repeats span residues 263-296 (VKCLNNLAASQLKLDHYRAALRSCSQVLEHQPDN) and 297-330 (IKALFRKGKVLAQQGEYSEAIPILRAALKLEPSN). Residue Ser287 is modified to Phosphoserine. Residues Lys298, Lys305, Lys325, Lys331, Lys339, Lys342, and Lys343 each participate in a glycyl lysine isopeptide (Lys-Gly) (interchain with G-Cter in ubiquitin) cross-link. Residues 381–401 (WLFGATAVALGGVALSVVIAA) traverse the membrane as a helical segment.

Homomultimers or heteromultimers (Potential). Forms heterodimer with calmodulin. When activated by calmodulin and calcium, interacts with the BH4 domain of BCL2 and weakly with BCLX isoform Bcl-X(L). Does not bind and inhibit calcineurin. Interacts with ZFYVE27; may negatively regulate ZFYVE27 phosphorylation. Ca(2+) serves as cofactor. Post-translationally, ubiquitinated by PRKN during mitophagy, leading to its degradation and enhancement of mitophagy. Deubiquitinated by USP30.

The protein resides in the mitochondrion membrane. The enzyme catalyses [protein]-peptidylproline (omega=180) = [protein]-peptidylproline (omega=0). Its function is as follows. Constitutively inactive PPiase, which becomes active when bound to calmodulin and calcium. Seems to act as a chaperone for BCL2, targets it to the mitochondria and modulates its phosphorylation state. The BCL2/FKBP8/calmodulin/calcium complex probably interferes with the binding of BCL2 to its targets. The active form of FKBP8 may therefore play a role in the regulation of apoptosis. The polypeptide is Peptidyl-prolyl cis-trans isomerase FKBP8 (Fkbp8) (Rattus norvegicus (Rat)).